We begin with the raw amino-acid sequence, 109 residues long: Toxin YpjF (109 aa).

This sequence belongs to the CbtA/YkfI/YpjF toxin family. As to quaternary structure, interacts with FtsZ but not MreB. Another group finds interaction with FtsZ and MreB.

Functionally, toxic component of a type IV toxin-antitoxin (TA) system. Acts as a dual toxin inhibitor that blocks cell division and cell elongation in genetically separable interactions with FtsZ and MreB. Overexpression results in inhibition of growth in liquid cultures. Overexpression leads to formation of lemon-shaped cells; inactivated by overexpression of cognate antitoxin YfjZ but not when the 2 genes are coexpressed from the same plasmid. Also neutralized by overexpression of non-cognate antitoxins YafW and CbeA. In Escherichia coli (strain K12), this protein is Toxin YpjF (ypjF).